Here is a 435-residue protein sequence, read N- to C-terminus: Nicotinate phosphoribosyltransferase (435 aa).

The residue at position 230 (His-230) is a Phosphohistidine; by autocatalysis.

This sequence belongs to the NAPRTase family. In terms of processing, transiently phosphorylated on a His residue during the reaction cycle. Phosphorylation strongly increases the affinity for substrates and increases the rate of nicotinate D-ribonucleotide production. Dephosphorylation regenerates the low-affinity form of the enzyme, leading to product release.

It carries out the reaction nicotinate + 5-phospho-alpha-D-ribose 1-diphosphate + ATP + H2O = nicotinate beta-D-ribonucleotide + ADP + phosphate + diphosphate. Its pathway is cofactor biosynthesis; NAD(+) biosynthesis; nicotinate D-ribonucleotide from nicotinate: step 1/1. In terms of biological role, catalyzes the synthesis of beta-nicotinate D-ribonucleotide from nicotinate and 5-phospho-D-ribose 1-phosphate at the expense of ATP. In Vibrio cholerae serotype O1 (strain ATCC 39541 / Classical Ogawa 395 / O395), this protein is Nicotinate phosphoribosyltransferase.